A 461-amino-acid chain; its full sequence is D-phenylhydantoinase (461 aa).

H59, H61, and K151 together coordinate a divalent metal cation. The residue at position 151 (K151) is an N6-carboxylysine. Y156 contributes to the substrate binding site. Residues H182 and H239 each coordinate a divalent metal cation. Substrate is bound at residue S286. D313 contributes to the a divalent metal cation binding site. Residue N335 coordinates substrate.

It belongs to the metallo-dependent hydrolases superfamily. Hydantoinase/dihydropyrimidinase family. In terms of assembly, homotetramer. It depends on Zn(2+) as a cofactor. Ni(2+) is required as a cofactor. Requires Co(2+) as cofactor. Mn(2+) serves as cofactor. Post-translationally, carboxylation allows a single lysine to coordinate two divalent metal cations.

It carries out the reaction D-5-phenylhydantoin + H2O = N-carbamoyl-D-phenylglycine + H(+). In terms of biological role, catalyzes the stereospecific hydrolysis of the cyclic amide bond of D-hydantoin derivatives with an aromatic side chains at the 5'-position. Has no activity on dihydropyrimidines. The physiological function is unknown. This chain is D-phenylhydantoinase (hyuA), found in Escherichia coli (strain K12).